The sequence spans 378 residues: Chaperone protein DnaJ (378 aa).

The J domain maps to 5–69 (EYYDRLGVSK…QKRAAYDQYG (65 aa)). Residues 134–216 (GVEKEVSYNR…CHGTGHEKQA (83 aa)) form a CR-type zinc finger. Zn(2+)-binding residues include Cys-147, Cys-150, Cys-164, Cys-167, Cys-190, Cys-193, Cys-204, and Cys-207. CXXCXGXG motif repeat units follow at residues 147-154 (CGTCLGSG), 164-171 (CRKCHGSG), 190-197 (CDICHGSG), and 204-211 (CQTCHGTG).

This sequence belongs to the DnaJ family. Homodimer. Zn(2+) is required as a cofactor.

It localises to the cytoplasm. Its function is as follows. Participates actively in the response to hyperosmotic and heat shock by preventing the aggregation of stress-denatured proteins and by disaggregating proteins, also in an autonomous, DnaK-independent fashion. Unfolded proteins bind initially to DnaJ; upon interaction with the DnaJ-bound protein, DnaK hydrolyzes its bound ATP, resulting in the formation of a stable complex. GrpE releases ADP from DnaK; ATP binding to DnaK triggers the release of the substrate protein, thus completing the reaction cycle. Several rounds of ATP-dependent interactions between DnaJ, DnaK and GrpE are required for fully efficient folding. Also involved, together with DnaK and GrpE, in the DNA replication of plasmids through activation of initiation proteins. This chain is Chaperone protein DnaJ, found in Streptococcus pyogenes serotype M6 (strain ATCC BAA-946 / MGAS10394).